Consider the following 109-residue polypeptide: Flagellar hook-basal body complex protein FliE (109 aa).

The protein belongs to the FliE family.

Its subcellular location is the bacterial flagellum basal body. This Pseudomonas aeruginosa (strain LESB58) protein is Flagellar hook-basal body complex protein FliE.